Consider the following 475-residue polypeptide: AAA-ATPase At1g43910 (475 aa).

A helical transmembrane segment spans residues Val-11 to Phe-28. Thr-85 is modified (phosphothreonine). Residue Gly-246–Ser-253 coordinates ATP. Disordered stretches follow at residues Ser-306–Arg-328 and Lys-453–Thr-475. Residues Ser-457–Asp-467 are compositionally biased toward acidic residues.

Belongs to the AAA ATPase family. BCS1 subfamily. Requires Mg(2+) as cofactor. As to expression, expressed in developing shoots.

It is found in the membrane. It catalyses the reaction ATP + H2O = ADP + phosphate + H(+). The sequence is that of AAA-ATPase At1g43910 from Arabidopsis thaliana (Mouse-ear cress).